Here is a 183-residue protein sequence, read N- to C-terminus: MLLPIPDYPCFSIKKEGRPFIDSCFLPLPSFPFPSCENVPLPYIQSTLKFGYLVFFFYITPRRHCNLAPPRWAARIMSYEVGTAPASSSLSSSFFTVTPFCAARSRRGLTVALIAQSRLPESGAAATFGWASCCCNSRKVHSIGHQIWSATVVSGNSVSEEVILNLNEWPRNCANCVYFSSRG.

This is an uncharacterized protein from Saccharomyces cerevisiae (strain ATCC 204508 / S288c) (Baker's yeast).